The chain runs to 235 residues: MESSKTFMRQMPITPGYSGFVPYLSCQGTSSEDNMANCLKIFQENTRRCKDQLEEFHCSVATAPKLKPVRSEGTVLRTLHQYYRQYHPLSLECKNIKKPLHEPPIPGWAGYLPRARVTELGCSTRYTVMARNCYRDFLDLMERAKQAHLKPYEKIYGVKSTPPPPTPPPKVLLHEGLLPKYPDFSIPGARCPTLSRALMEDPRPLMTCGCPQRPSVWCSGKIYLEPLSGGKDMEG.

In terms of assembly, microtubule inner protein component of sperm flagellar doublet microtubules. In terms of tissue distribution, expressed in sperm.

It localises to the cytoplasm. Its subcellular location is the cytoskeleton. It is found in the flagellum axoneme. The protein resides in the nucleus. Microtubule inner protein (MIP) part of the dynein-decorated doublet microtubules (DMTs) in flagellum axoneme. May serve to reinforce and thus stabilize the microtubule structure in the sperm flagella. This chain is Sperm-associated microtubule inner protein 5 (SPMIP5), found in Bos taurus (Bovine).